Reading from the N-terminus, the 373-residue chain is MRLLFRFLTLVAVLAMSLADVAPAWALTSRIKDIASLQAGRDNQLIGYGLIVGLQGTGDGFRSSPFTEQSMRAMLQNLGISTQGGQSNAKNTAAVMVTANLPPFASPGSRIDVTVSSLGDATSLRGGTLVMTSLSGADGQIYAVAQGAVIVSGFQAQGQAATVTEGVTTAGRVPGGAIIERELPSRFKDSVNLVLQLRNPDFSTAIRIADIVNGYASARFGGPVAEAKDSQEVVIQKPRTADLTRLMADVENLIVETDTPAKVVINERTGTIVIGSDVRVSPVAVSYGTLTVQVTETPQIIQPEPFSRGRTAVQPQTDIAAEQTGGRVAIIDGPDLRTLVAGLNNIGVKPDGIIAILQGIKSAGALQAELVLQ.

A signal peptide spans 1–26 (MRLLFRFLTLVAVLAMSLADVAPAWA).

Belongs to the FlgI family. In terms of assembly, the basal body constitutes a major portion of the flagellar organelle and consists of four rings (L,P,S, and M) mounted on a central rod.

The protein resides in the periplasm. It localises to the bacterial flagellum basal body. Assembles around the rod to form the L-ring and probably protects the motor/basal body from shearing forces during rotation. The sequence is that of Flagellar P-ring protein from Rhizobium etli (strain CIAT 652).